Consider the following 141-residue polypeptide: Large ribosomal subunit protein uL11 (141 aa).

It belongs to the universal ribosomal protein uL11 family. Part of the ribosomal stalk of the 50S ribosomal subunit. Interacts with L10 and the large rRNA to form the base of the stalk. L10 forms an elongated spine to which L12 dimers bind in a sequential fashion forming a multimeric L10(L12)X complex. One or more lysine residues are methylated.

In terms of biological role, forms part of the ribosomal stalk which helps the ribosome interact with GTP-bound translation factors. The protein is Large ribosomal subunit protein uL11 of Latilactobacillus sakei subsp. sakei (strain 23K) (Lactobacillus sakei subsp. sakei).